The following is a 231-amino-acid chain: MKRAVVVFSGGQDSTTCLAQARHQYDEVHCVTFDYGQRHRAEIDVARALALKLGARAHKVLDVTLLNELAVSSLTRDSIPVPDYEPNADGIPNTFVPGRNILFLTLAAIYAYQVKAEAVITGVCETDFSGYPDCRDEFVKALNHAVNLGMAKDIRFETPLMWIDKAETWALADYWGQLELVREETLTCYNGIKGDGCGHCAACNLRANGLNHYLSNKAAVMAAMKQKTGLR.

8-18 (FSGGQDSTTCL) serves as a coordination point for ATP. The Zn(2+) site is built by Cys188, Cys197, Cys200, and Cys203.

Belongs to the QueC family. Zn(2+) serves as cofactor.

It catalyses the reaction 7-carboxy-7-deazaguanine + NH4(+) + ATP = 7-cyano-7-deazaguanine + ADP + phosphate + H2O + H(+). It participates in purine metabolism; 7-cyano-7-deazaguanine biosynthesis. In terms of biological role, catalyzes the ATP-dependent conversion of 7-carboxy-7-deazaguanine (CDG) to 7-cyano-7-deazaguanine (preQ(0)). The protein is 7-cyano-7-deazaguanine synthase of Salmonella schwarzengrund (strain CVM19633).